We begin with the raw amino-acid sequence, 709 residues long: Fatty acid oxidation complex subunit alpha (709 aa).

Residues 1 to 188 (MEKTFNLTRR…KMGLVNDVVP (188 aa)) form an enoyl-CoA hydratase region. A 3-hydroxyacyl-CoA dehydrogenase region spans residues 308-709 (RKVKKAVILG…EMAAEKTRFF (402 aa)).

In the N-terminal section; belongs to the enoyl-CoA hydratase/isomerase family. It in the central section; belongs to the 3-hydroxyacyl-CoA dehydrogenase family. In terms of assembly, heterotetramer of two alpha chains (FadJ) and two beta chains (FadI).

It is found in the cytoplasm. The catalysed reaction is a (3S)-3-hydroxyacyl-CoA = a (2E)-enoyl-CoA + H2O. The enzyme catalyses a 4-saturated-(3S)-3-hydroxyacyl-CoA = a (3E)-enoyl-CoA + H2O. It carries out the reaction a (3S)-3-hydroxyacyl-CoA + NAD(+) = a 3-oxoacyl-CoA + NADH + H(+). It catalyses the reaction (3S)-3-hydroxybutanoyl-CoA = (3R)-3-hydroxybutanoyl-CoA. It functions in the pathway lipid metabolism; fatty acid beta-oxidation. In terms of biological role, catalyzes the formation of a hydroxyacyl-CoA by addition of water on enoyl-CoA. Also exhibits 3-hydroxyacyl-CoA epimerase and 3-hydroxyacyl-CoA dehydrogenase activities. The polypeptide is Fatty acid oxidation complex subunit alpha (Shewanella sp. (strain MR-4)).